We begin with the raw amino-acid sequence, 956 residues long: Probable hypoxanthine oxidase XdhD (956 aa).

Residues Gln414, Phe445, and Ala727 each contribute to the Mo-molybdopterin site.

This sequence belongs to the xanthine dehydrogenase family. [2Fe-2S] cluster serves as cofactor. Mo-molybdopterin is required as a cofactor.

In terms of biological role, probably has no xanthine dehydrogenase activity; however deletion results in increased adenine sensitivity, suggesting that this protein contributes to the conversion of adenine to guanine nucleotides during purine salvage. In Escherichia coli O157:H7, this protein is Probable hypoxanthine oxidase XdhD (xdhD).